Here is a 62-residue protein sequence, read N- to C-terminus: Large ribosomal subunit protein uL30 (62 aa).

Belongs to the universal ribosomal protein uL30 family. As to quaternary structure, part of the 50S ribosomal subunit.

This is Large ribosomal subunit protein uL30 from Marinobacter nauticus (strain ATCC 700491 / DSM 11845 / VT8) (Marinobacter aquaeolei).